Reading from the N-terminus, the 575-residue chain is Epsin-1 (575 aa).

Arg-8, Lys-11, Arg-25, Asn-30, Arg-63, and His-73 together coordinate a 1,2-diacyl-sn-glycero-3-phospho-(1D-myo-inositol-4,5-bisphosphate). Residues 12-144 enclose the ENTH domain; it reads NIVHNYSEAE…RDEDRLREER (133 aa). The segment at 149 to 186 is disordered; that stretch reads KTKEKLAQTATASSAAVGSGPPPEAEQAWPQSSGEEEL. Positions 157-167 are enriched in low complexity; sequence TATASSAAVGS. 3 UIM domains span residues 183–202, 208–227, and 233–252; these read EEEL…ADQP, EDDV…HDKE, and GDDL…TGGK. Disordered regions lie at residues 264-283 and 293-575; these read FTTP…ASVP and SDPW…PFLL. Tandem repeats lie at residues 274 to 276, 294 to 296, 306 to 308, 319 to 321, 332 to 334, 349 to 351, 367 to 369, and 377 to 379. Positions 274–379 are 8 X 3 AA repeats of D-P-W; sequence DPWGGPASVP…APAPAFSDPW (106 aa). The span at 306-316 shows a compositional bias: low complexity; the sequence is DPWGGAAPTPA. Residues 333-346 are compositionally biased toward low complexity; sequence PWGGTPAPAAGEGP. A compositionally biased stretch (low complexity) spans 367 to 379; sequence DPWAPAPAFSDPW. Ser-382 is modified (phosphoserine). Residues 401-410 carry the [DE]-X(1,2)-F-X-X-[FL]-X-X-X-R motif motif; it reads DEFSDFDRLR. Phosphoserine occurs at positions 418 and 419. At Thr-420 the chain carries Phosphothreonine. Residues Ser-434, Ser-446, and Ser-453 each carry the phosphoserine modification. Residues 453–467 show a composition bias toward pro residues; the sequence is SPPPAATPTPTPPTR. Thr-459, Thr-463, and Thr-469 each carry phosphothreonine. Ser-472 is modified (phosphoserine). A Phosphothreonine modification is found at Thr-493. 2 consecutive repeat copies span residues 501 to 503 and 517 to 519. The segment at 501 to 573 is 3 X 3 AA repeats of N-P-F; it reads NPFLPSGAPA…GPPAPNTNPF (73 aa). Arg-533 is subject to Omega-N-methylarginine. A compositionally biased stretch (pro residues) spans 556 to 569; sequence GLPPMMPPGPPAPN. Residues 571–573 form repeat 3; sequence NPF.

This sequence belongs to the epsin family. Monomer. Binds ITSN1. Binds clathrin, ZBTB16/ZNF145, AP2A1 and AP2A2. Binds ubiquitinated proteins. Interacts with RALBP1 in a complex also containing NUMB and TFAP2A during interphase and mitosis. Interacts with AP2B1. Interacts with UBQLN2. Interacts with REPS2; the interaction is direct. Interacts with EPS15; the interaction is direct. Interacts with ENTREP1. Ubiquitinated. In terms of processing, phosphorylated on serine and/or threonine residues in mitotic cells. Phosphorylation reduces interaction with REPS2, AP-2 and the membrane fraction. Depolarization of synaptosomes results in dephosphorylation. In terms of tissue distribution, ubiquitously expressed. Detected in liver, spleen and testis, and weakly in lung and thymus (at protein level).

The protein resides in the cytoplasm. It is found in the cell membrane. It localises to the nucleus. The protein localises to the membrane. Its subcellular location is the clathrin-coated pit. Functionally, binds to membranes enriched in phosphatidylinositol 4,5-bisphosphate (PtdIns(4,5)P2). Modifies membrane curvature and facilitates the formation of clathrin-coated invaginations. Regulates receptor-mediated endocytosis. This is Epsin-1 (Epn1) from Rattus norvegicus (Rat).